Consider the following 347-residue polypeptide: Probable dual-specificity RNA methyltransferase RlmN (347 aa).

Residue Glu-94 is the Proton acceptor of the active site. Positions 100–334 (TETRTTACVS…AKVRHSRGKD (235 aa)) constitute a Radical SAM core domain. The cysteines at positions 107 and 339 are disulfide-linked. [4Fe-4S] cluster contacts are provided by Cys-114, Cys-118, and Cys-121. S-adenosyl-L-methionine is bound by residues 165 to 166 (GE), Ser-197, 220 to 222 (SLH), and Asn-296. The active-site S-methylcysteine intermediate is the Cys-339.

It belongs to the radical SAM superfamily. RlmN family. Requires [4Fe-4S] cluster as cofactor.

The protein resides in the cytoplasm. It catalyses the reaction adenosine(2503) in 23S rRNA + 2 reduced [2Fe-2S]-[ferredoxin] + 2 S-adenosyl-L-methionine = 2-methyladenosine(2503) in 23S rRNA + 5'-deoxyadenosine + L-methionine + 2 oxidized [2Fe-2S]-[ferredoxin] + S-adenosyl-L-homocysteine. The enzyme catalyses adenosine(37) in tRNA + 2 reduced [2Fe-2S]-[ferredoxin] + 2 S-adenosyl-L-methionine = 2-methyladenosine(37) in tRNA + 5'-deoxyadenosine + L-methionine + 2 oxidized [2Fe-2S]-[ferredoxin] + S-adenosyl-L-homocysteine. Functionally, specifically methylates position 2 of adenine 2503 in 23S rRNA and position 2 of adenine 37 in tRNAs. The protein is Probable dual-specificity RNA methyltransferase RlmN of Flavobacterium psychrophilum (strain ATCC 49511 / DSM 21280 / CIP 103535 / JIP02/86).